The chain runs to 155 residues: Ribonuclease H (155 aa).

Residues 1–142 form the RNase H type-1 domain; the sequence is MLKQVEIFTD…CDVLARDAAS (142 aa). Mg(2+)-binding residues include aspartate 10, glutamate 48, aspartate 70, and aspartate 134.

Belongs to the RNase H family. In terms of assembly, monomer. Requires Mg(2+) as cofactor.

It is found in the cytoplasm. The enzyme catalyses Endonucleolytic cleavage to 5'-phosphomonoester.. In terms of biological role, endonuclease that specifically degrades the RNA of RNA-DNA hybrids. In Serratia proteamaculans (strain 568), this protein is Ribonuclease H.